We begin with the raw amino-acid sequence, 372 residues long: Germination protease (372 aa).

Positions 1-15 (MVKELNLEQYNVRTD) are excised as a propeptide.

The protein belongs to the peptidase A25 family. In terms of assembly, homotetramer. Post-translationally, autoproteolytically processed. The inactive tetrameric zymogen termed p46 autoprocesses to a smaller form termed p41, which is active only during spore germination.

It catalyses the reaction Endopeptidase action with P4 Glu or Asp, P1 preferably Glu &gt; Asp, P1' hydrophobic and P2' Ala.. Initiates the rapid degradation of small, acid-soluble proteins during spore germination. In Halalkalibacterium halodurans (strain ATCC BAA-125 / DSM 18197 / FERM 7344 / JCM 9153 / C-125) (Bacillus halodurans), this protein is Germination protease.